The primary structure comprises 59 residues: UPF0391 membrane protein AZC_4184 (59 aa).

A run of 2 helical transmembrane segments spans residues 4 to 24 (WALTFLVVAIIAAVLGFTAVA) and 30 to 50 (IAKIIFYVAIVLFLISAVMGF).

It belongs to the UPF0391 family.

It is found in the cell membrane. The chain is UPF0391 membrane protein AZC_4184 from Azorhizobium caulinodans (strain ATCC 43989 / DSM 5975 / JCM 20966 / LMG 6465 / NBRC 14845 / NCIMB 13405 / ORS 571).